We begin with the raw amino-acid sequence, 326 residues long: tRNA-modifying protein YgfZ (326 aa).

Folate is bound by residues Trp-27 and Trp-189.

This sequence belongs to the tRNA-modifying YgfZ family.

It localises to the cytoplasm. Functionally, folate-binding protein involved in regulating the level of ATP-DnaA and in the modification of some tRNAs. It is probably a key factor in regulatory networks that act via tRNA modification, such as initiation of chromosomal replication. The sequence is that of tRNA-modifying protein YgfZ from Escherichia coli O127:H6 (strain E2348/69 / EPEC).